The chain runs to 602 residues: Sodium-independent sulfate anion transporter (602 aa).

Topologically, residues 1-47 (MSPPMSPMKPPKGFAPMSCCWSTETMQKWLPFLGWLPDYTWYALKMD) are extracellular. A helical membrane pass occupies residues 48–68 (FIAGISVGLTVIPQALAYAEV). Residue alanine 69 is a topological domain, cytoplasmic. Residues 70-90 (GLPPQYGLYSAFMGCFVYFFL) form a helical membrane-spanning segment. Residues 91–115 (GTSRDVTLGPTAIMSLLVSFYTFHE) lie on the Extracellular side of the membrane. The chain crosses the membrane as a helical span at residues 116 to 136 (PAYAVLLAFLTGCIQLGMGFL). Residues 137-143 (RLGLLLD) are Cytoplasmic-facing. The helical transmembrane segment at 144-164 (FISCPVIKGFTSAAAIIIGFG) threads the bilayer. The Extracellular segment spans residues 165–193 (QIKNLLGLQHIPRQFFLQVYYTFHNIGET). A helical transmembrane segment spans residues 194–214 (RVGDAVLGLVCMVLLLVLKLM). The Cytoplasmic segment spans residues 215–246 (RDHVPPVHPEMPTGVRLSHGLVWTATTARNAL). A helical transmembrane segment spans residues 247 to 267 (VVSFAALVAYSFQVTGYQPFV). Topologically, residues 268–300 (LTGKTPEGLPDAHIPPFSVTTANGTISFTEMVQ) are extracellular. A helical membrane pass occupies residues 301-321 (GMGAGLVVVPLMGLLESIAVA). Over 322–337 (KSFASQNNYRINSNQE) the chain is Cytoplasmic. A helical transmembrane segment spans residues 338-358 (LLALGFTNILGSLFSSYPVTG). Over 359-370 (SFGRTAVNAQSG) the chain is Extracellular. Residues 371 to 391 (VCTPAGGLMTGALVLLSLDYL) traverse the membrane as a helical segment. The Cytoplasmic portion of the chain corresponds to 392-394 (TSL). Residues 395 to 415 (FYYIPKSALAAVIIMAVVPLF) traverse the membrane as a helical segment. At 416–438 (DTKIVKTLWRVKRLDLLPLCVTF) the chain is on the extracellular side. A helical membrane pass occupies residues 439 to 459 (LLCFWEVQYGILAGTLVSVLI). The Cytoplasmic portion of the chain corresponds to 460 to 602 (LLHSVARPKI…PEHKIALLKA (143 aa)). Residues 466-580 (RPKIQVSEGP…EAEKYLKQEP (115 aa)) form the STAS domain.

The protein belongs to the SLC26A/SulP transporter (TC 2.A.53) family.

The protein resides in the cell membrane. Its subcellular location is the lysosome membrane. It is found in the apical cell membrane. It localises to the basolateral cell membrane. The enzyme catalyses hydrogencarbonate(in) + chloride(out) = hydrogencarbonate(out) + chloride(in). It carries out the reaction sulfate(in) + H(+)(in) = sulfate(out) + H(+)(out). It catalyses the reaction oxalate(in) + chloride(out) = oxalate(out) + chloride(in). In terms of biological role, sodium-independent anion exchanger mediating bicarbonate, chloride, sulfate and oxalate transport. Exhibits sodium-independent sulfate anion transporter activity that may cooperate with SLC26A2 to mediate DIDS-sensitive sulfate uptake into high endothelial venules endothelial cells (HEVEC). In the kidney, mediates chloride-bicarbonate exchange, facilitating V-ATPase-mediated acid secretion. May function as a chloride channel, playing an important role in moderating chloride homeostasis and neuronal activity in the cerebellum. In Bos taurus (Bovine), this protein is Sodium-independent sulfate anion transporter.